Reading from the N-terminus, the 261-residue chain is Cytochrome c oxidase subunit 3 (261 aa).

At 1–15 (MTHQTHAYHMVNPSP) the chain is on the mitochondrial matrix side. The helical transmembrane segment at 16-34 (WPLTGALSALLMTSGLTMW) threads the bilayer. The Mitochondrial intermembrane segment spans residues 35–40 (FHFNSM). The helical transmembrane segment at 41 to 66 (LLLSLGLLTNTLTMYQWWRDIIREST) threads the bilayer. Over 67 to 72 (FQGHHT) the chain is Mitochondrial matrix. Residues 73 to 105 (SVVQKGLRYGMILFIISEVLFFTGFFWAFYHSS) form a helical membrane-spanning segment. The Mitochondrial intermembrane portion of the chain corresponds to 106–128 (LAPTPELGGCWPPTGIHPLNPLE). Residues 129 to 152 (VPLLNTSILLASGVSITWAHHSLM) form a helical membrane-spanning segment. The Mitochondrial matrix portion of the chain corresponds to 153–155 (EGD). Residues 156–183 (RKHMIQALSITIALGVYFTLLQASEYYE) form a helical membrane-spanning segment. At 184–190 (APFTISD) the chain is on the mitochondrial intermembrane side. The helical transmembrane segment at 191 to 223 (GVYGSTFFVATGFHGLHVIIGSTFLAVCLLRQL) threads the bilayer. Residues 224–232 (KFHFTSNHH) are Mitochondrial matrix-facing. A helical membrane pass occupies residues 233–256 (FGFEAAAWYWHFVDVVWLFLYVSI). Residues 257-261 (YWWGS) are Mitochondrial intermembrane-facing.

The protein belongs to the cytochrome c oxidase subunit 3 family. Component of the cytochrome c oxidase (complex IV, CIV), a multisubunit enzyme composed of 14 subunits. The complex is composed of a catalytic core of 3 subunits MT-CO1, MT-CO2 and MT-CO3, encoded in the mitochondrial DNA, and 11 supernumerary subunits COX4I, COX5A, COX5B, COX6A, COX6B, COX6C, COX7A, COX7B, COX7C, COX8 and NDUFA4, which are encoded in the nuclear genome. The complex exists as a monomer or a dimer and forms supercomplexes (SCs) in the inner mitochondrial membrane with NADH-ubiquinone oxidoreductase (complex I, CI) and ubiquinol-cytochrome c oxidoreductase (cytochrome b-c1 complex, complex III, CIII), resulting in different assemblies (supercomplex SCI(1)III(2)IV(1) and megacomplex MCI(2)III(2)IV(2)).

It localises to the mitochondrion inner membrane. It carries out the reaction 4 Fe(II)-[cytochrome c] + O2 + 8 H(+)(in) = 4 Fe(III)-[cytochrome c] + 2 H2O + 4 H(+)(out). Component of the cytochrome c oxidase, the last enzyme in the mitochondrial electron transport chain which drives oxidative phosphorylation. The respiratory chain contains 3 multisubunit complexes succinate dehydrogenase (complex II, CII), ubiquinol-cytochrome c oxidoreductase (cytochrome b-c1 complex, complex III, CIII) and cytochrome c oxidase (complex IV, CIV), that cooperate to transfer electrons derived from NADH and succinate to molecular oxygen, creating an electrochemical gradient over the inner membrane that drives transmembrane transport and the ATP synthase. Cytochrome c oxidase is the component of the respiratory chain that catalyzes the reduction of oxygen to water. Electrons originating from reduced cytochrome c in the intermembrane space (IMS) are transferred via the dinuclear copper A center (CU(A)) of subunit 2 and heme A of subunit 1 to the active site in subunit 1, a binuclear center (BNC) formed by heme A3 and copper B (CU(B)). The BNC reduces molecular oxygen to 2 water molecules using 4 electrons from cytochrome c in the IMS and 4 protons from the mitochondrial matrix. This chain is Cytochrome c oxidase subunit 3 (MT-CO3), found in Sus scrofa (Pig).